A 65-amino-acid chain; its full sequence is Large ribosomal subunit protein uL29 (65 aa).

The protein belongs to the universal ribosomal protein uL29 family.

The sequence is that of Large ribosomal subunit protein uL29 from Buchnera aphidicola subsp. Schizaphis graminum (strain Sg).